Consider the following 316-residue polypeptide: Acetyl-coenzyme A carboxylase carboxyl transferase subunit alpha (316 aa).

The region spanning 39 to 293 is the CoA carboxyltransferase C-terminal domain; sequence RLQDKSKALT…RGELLAQLKM (255 aa).

This sequence belongs to the AccA family. In terms of assembly, acetyl-CoA carboxylase is a heterohexamer composed of biotin carboxyl carrier protein (AccB), biotin carboxylase (AccC) and two subunits each of ACCase subunit alpha (AccA) and ACCase subunit beta (AccD).

Its subcellular location is the cytoplasm. The enzyme catalyses N(6)-carboxybiotinyl-L-lysyl-[protein] + acetyl-CoA = N(6)-biotinyl-L-lysyl-[protein] + malonyl-CoA. It participates in lipid metabolism; malonyl-CoA biosynthesis; malonyl-CoA from acetyl-CoA: step 1/1. Its function is as follows. Component of the acetyl coenzyme A carboxylase (ACC) complex. First, biotin carboxylase catalyzes the carboxylation of biotin on its carrier protein (BCCP) and then the CO(2) group is transferred by the carboxyltransferase to acetyl-CoA to form malonyl-CoA. The chain is Acetyl-coenzyme A carboxylase carboxyl transferase subunit alpha from Pseudomonas aeruginosa (strain UCBPP-PA14).